The sequence spans 197 residues: MTHALDTLALNQLFTEARTHNAWRDEPVAPELLRQLHELAKWGPTAMNCCPLRVRFIVGAEARARLLPLMSEGNRAKTAAAPVIAILGRDVDFHQHMPTLAPHMAGARERFADQPAQREAMSQLNGALEAGYFILAARALGLDCGPMGGFDAAAVDAEFWAGTAVRSMIVCNLGHGDPAGLRPRAPRLDFDTACAVL.

The protein belongs to the nitroreductase family. HadB/RutE subfamily. FMN serves as cofactor.

This Leptothrix cholodnii (strain ATCC 51168 / LMG 8142 / SP-6) (Leptothrix discophora (strain SP-6)) protein is Putative NADH dehydrogenase/NAD(P)H nitroreductase Lcho_1290.